The chain runs to 908 residues: Magnesium-transporting ATPase, P-type 1 (908 aa).

The segment covering 1–20 (MTDMNIENRKLNRPASENDK) has biased composition (basic and acidic residues). Residues 1–21 (MTDMNIENRKLNRPASENDKQ) are disordered. At 1–80 (MTDMNIENRK…QVPPALIQLL (80 aa)) the chain is on the cytoplasmic side. The helical transmembrane segment at 81-101 (QAFNNPFIYVLMALAGVSFIT) threads the bilayer. The Extracellular portion of the chain corresponds to 102–113 (DYWLPLRRGEET). Residues 114-134 (DLTGVLIILTMVSLSGLLRFW) form a helical membrane-spanning segment. The Cytoplasmic portion of the chain corresponds to 135 to 293 (QEFRTNRAAQ…QTAFDRGVNS (159 aa)). Residues 294–314 (VSWLLIRFMLIMVPVVLLING) traverse the membrane as a helical segment. Residues 315-323 (FSKGDWVEA) are Extracellular-facing. The helical transmembrane segment at 324–341 (SLFALAVAVGLTPEMLPM) threads the bilayer. E337 contacts Mg(2+). Over 342–704 (IVSSNLAKGA…IKGRETFGNI (363 aa)) the chain is Cytoplasmic. D379 (4-aspartylphosphate intermediate) is an active-site residue. Mg(2+)-binding residues include D650, D654, and N718. Residues 705–724 (IKYLNMTASSNFGNVFSVLV) traverse the membrane as a helical segment. Topologically, residues 725–733 (ASAFIPFLP) are extracellular. The helical transmembrane segment at 734-753 (MLAIHLLIQNLMYDISQLSL) threads the bilayer. 2 residues coordinate Mg(2+): N743 and D747. Residues 754-775 (PWDKMDKEFLRKPRKWDAKNIG) are Cytoplasmic-facing. Residues 776-799 (RFMLWIGPTSSIFDITTFALMWYV) traverse the membrane as a helical segment. Residues 800–808 (FAANNVEAQ) lie on the Extracellular side of the membrane. The helical transmembrane segment at 809–827 (ALFQSGWFIEGLLSQTLVV) threads the bilayer. Residues 828-840 (HMLRTQKIPFIQS) lie on the Cytoplasmic side of the membrane. Residues 841–860 (RATLPVLLTTGLIMAIGIYI) form a helical membrane-spanning segment. Residues 861–875 (PFSPLGAMVGLEPLP) are Extracellular-facing. A helical transmembrane segment spans residues 876–895 (LSYFPWLVATLLSYCLVAQG). At 896–908 (MKRFYIKRFGQWF) the chain is on the cytoplasmic side.

It belongs to the cation transport ATPase (P-type) (TC 3.A.3) family. Type IIIB subfamily.

The protein resides in the cell inner membrane. The enzyme catalyses Mg(2+)(out) + ATP + H2O = Mg(2+)(in) + ADP + phosphate + H(+). Mediates magnesium influx to the cytosol. The chain is Magnesium-transporting ATPase, P-type 1 (mgtB) from Salmonella typhimurium (strain LT2 / SGSC1412 / ATCC 700720).